Consider the following 169-residue polypeptide: Transcription antitermination protein NusB (169 aa).

Belongs to the NusB family.

Its function is as follows. Involved in transcription antitermination. Required for transcription of ribosomal RNA (rRNA) genes. Binds specifically to the boxA antiterminator sequence of the ribosomal RNA (rrn) operons. The polypeptide is Transcription antitermination protein NusB (Rhodococcus opacus (strain B4)).